Reading from the N-terminus, the 387-residue chain is Lipid-A-disaccharide synthase (387 aa).

The protein belongs to the LpxB family.

It carries out the reaction 2-N,3-O-bis[(3R)-3-hydroxytetradecanoyl]-alpha-D-glucosaminyl 1-phosphate + UDP-2-N,3-O-bis[(3R)-3-hydroxytetradecanoyl]-alpha-D-glucosamine = lipid A disaccharide (E. coli) + UDP + H(+). It catalyses the reaction a lipid X + a UDP-2-N,3-O-bis[(3R)-3-hydroxyacyl]-alpha-D-glucosamine = a lipid A disaccharide + UDP + H(+). Its pathway is glycolipid biosynthesis; lipid IV(A) biosynthesis; lipid IV(A) from (3R)-3-hydroxytetradecanoyl-[acyl-carrier-protein] and UDP-N-acetyl-alpha-D-glucosamine: step 5/6. Condensation of UDP-2,3-diacylglucosamine and 2,3-diacylglucosamine-1-phosphate to form lipid A disaccharide, a precursor of lipid A, a phosphorylated glycolipid that anchors the lipopolysaccharide to the outer membrane of the cell. In Blochmanniella pennsylvanica (strain BPEN), this protein is Lipid-A-disaccharide synthase.